The sequence spans 208 residues: Guanylate kinase (208 aa).

Residues 4–185 (GNLYIISAPS…ALVDLEHILR (182 aa)) enclose the Guanylate kinase-like domain. Residue 11–18 (APSGAGKS) participates in ATP binding.

Belongs to the guanylate kinase family.

The protein resides in the cytoplasm. It carries out the reaction GMP + ATP = GDP + ADP. Essential for recycling GMP and indirectly, cGMP. In Histophilus somni (strain 129Pt) (Haemophilus somnus), this protein is Guanylate kinase.